The sequence spans 296 residues: Cyclin-dependent kinase 1 (296 aa).

A Protein kinase domain is found at F5–F288. Residues I11–V19 and K34 each bind ATP. D130 serves as the catalytic Proton acceptor.

It belongs to the protein kinase superfamily. CMGC Ser/Thr protein kinase family. CDC2/CDKX subfamily.

Its subcellular location is the nucleus. The catalysed reaction is L-seryl-[protein] + ATP = O-phospho-L-seryl-[protein] + ADP + H(+). The enzyme catalyses L-threonyl-[protein] + ATP = O-phospho-L-threonyl-[protein] + ADP + H(+). In terms of biological role, cyclin-dependent kinase that acts as a master regulator of the mitotic and meiotic cell cycles. This Encephalitozoon cuniculi (strain GB-M1) (Microsporidian parasite) protein is Cyclin-dependent kinase 1.